An 85-amino-acid chain; its full sequence is Putative membrane protein insertion efficiency factor (85 aa).

The tract at residues Pro-62–Gly-85 is disordered.

The protein belongs to the UPF0161 family.

The protein resides in the cell inner membrane. Could be involved in insertion of integral membrane proteins into the membrane. This chain is Putative membrane protein insertion efficiency factor, found in Ruegeria pomeroyi (strain ATCC 700808 / DSM 15171 / DSS-3) (Silicibacter pomeroyi).